The following is a 179-amino-acid chain: Large ribosomal subunit protein uL5 (179 aa).

It belongs to the universal ribosomal protein uL5 family. Part of the 50S ribosomal subunit; part of the 5S rRNA/L5/L18/L25 subcomplex. Contacts the 5S rRNA and the P site tRNA. Forms a bridge to the 30S subunit in the 70S ribosome.

Functionally, this is one of the proteins that bind and probably mediate the attachment of the 5S RNA into the large ribosomal subunit, where it forms part of the central protuberance. In the 70S ribosome it contacts protein S13 of the 30S subunit (bridge B1b), connecting the 2 subunits; this bridge is implicated in subunit movement. Contacts the P site tRNA; the 5S rRNA and some of its associated proteins might help stabilize positioning of ribosome-bound tRNAs. The polypeptide is Large ribosomal subunit protein uL5 (Chromobacterium violaceum (strain ATCC 12472 / DSM 30191 / JCM 1249 / CCUG 213 / NBRC 12614 / NCIMB 9131 / NCTC 9757 / MK)).